Reading from the N-terminus, the 312-residue chain is Pectinesterase inhibitor 10 (312 aa).

A signal peptide spans 1 to 25; sequence MNILSQTQILHLSIAILLFITTSSS. 2 stretches are compositionally biased toward low complexity: residues 24 to 36 and 44 to 55; these read SSSLSPSSSSPSL and SPSSAPPSSLSP. The segment at 24–141 is disordered; the sequence is SSSLSPSSSS…PSSSSSTYSN (118 aa). The segment covering 56–75 has biased composition (pro residues); that stretch reads SSPPPLSLSPSSPPPPPPSS. 2 stretches are compositionally biased toward low complexity: residues 76–85 and 93–104; these read SPLSSLSPSL and SPSSAPPSSLSP. Residues 105-124 are compositionally biased toward pro residues; that stretch reads SSPPPLSLSPSSPPPPPPSS. The span at 125–137 shows a compositional bias: low complexity; the sequence is SPLSSLSPSSSSS. Residues Asn-141, Asn-153, Asn-185, and Asn-200 are each glycosylated (N-linked (GlcNAc...) asparagine). Cys-152 and Cys-161 are disulfide-bonded. Residues Cys-218 and Cys-268 are joined by a disulfide bond.

The protein belongs to the PMEI family.

It is found in the secreted. It localises to the extracellular space. The protein localises to the apoplast. Its function is as follows. Pectin methylesterase (PME) inhibitor involved in the maintenance of cell wall integrity in response to necrotrophic pathogens. Modulates PME activity and pectin methylesterification during infection by Botrytis cinerea and contributes to resistance against the pathogen. The chain is Pectinesterase inhibitor 10 from Arabidopsis thaliana (Mouse-ear cress).